Here is a 310-residue protein sequence, read N- to C-terminus: tRNA uridine(34) hydroxylase (310 aa).

The Rhodanese domain maps to 127 to 225 (KDKDTIVIDT…YLEDISKEES (99 aa)). Residue C185 is the Cysteine persulfide intermediate of the active site.

The protein belongs to the TrhO family.

It carries out the reaction uridine(34) in tRNA + AH2 + O2 = 5-hydroxyuridine(34) in tRNA + A + H2O. Catalyzes oxygen-dependent 5-hydroxyuridine (ho5U) modification at position 34 in tRNAs. This is tRNA uridine(34) hydroxylase from Prochlorococcus marinus (strain MIT 9515).